The chain runs to 196 residues: MRVKICGITNLEDALVAIEAGADALGFVFYEKSPRYIHPQEAKIISKKLPPFVERVGLFVHEEPVKIDEICSYCNMSLAQIHFDVEESFFEKLQTKALPVVRAKCAEDILQFSDRYRLVDAYVPEFGGAGRRVALEWFENIDCSKIVLAGGLSPKNVSEVKRYGFYGVDVSSGVEARKGKKDPQKVREFIQKAKFE.

It belongs to the TrpF family.

The enzyme catalyses N-(5-phospho-beta-D-ribosyl)anthranilate = 1-(2-carboxyphenylamino)-1-deoxy-D-ribulose 5-phosphate. The protein operates within amino-acid biosynthesis; L-tryptophan biosynthesis; L-tryptophan from chorismate: step 3/5. The sequence is that of N-(5'-phosphoribosyl)anthranilate isomerase from Nitratiruptor sp. (strain SB155-2).